We begin with the raw amino-acid sequence, 506 residues long: Anaerobic nitric oxide reductase transcription regulator NorR (506 aa).

4-aspartylphosphate is present on aspartate 57. A Sigma-54 factor interaction domain is found at 187-416 (MIGLSPAMTQ…LEHAIHRAVV (230 aa)). Residues 215-222 (GETGTGKE) and 278-287 (ADNGTLFLDE) contribute to the ATP site. The H-T-H motif DNA-binding region spans 481–500 (WAASARALETDVANLHRLAK).

Its pathway is nitrogen metabolism; nitric oxide reduction. Required for the expression of anaerobic nitric oxide (NO) reductase, acts as a transcriptional activator for at least the norVW operon. Activation also requires sigma-54. This chain is Anaerobic nitric oxide reductase transcription regulator NorR, found in Salmonella paratyphi C (strain RKS4594).